A 120-amino-acid polypeptide reads, in one-letter code: UPF0231 protein KPN78578_01240 (120 aa).

The protein belongs to the UPF0231 family.

This chain is UPF0231 protein KPN78578_01240, found in Klebsiella pneumoniae subsp. pneumoniae (strain ATCC 700721 / MGH 78578).